Here is a 465-residue protein sequence, read N- to C-terminus: Cysteine--tRNA ligase (465 aa).

C27 is a binding site for Zn(2+). A 'HIGH' region motif is present at residues 29–39; sequence PTVYDDAHLGH. The Zn(2+) site is built by C207, H237, and E241. The 'KMSKS' region motif lies at 269 to 273; that stretch reads KMSKS. K272 provides a ligand contact to ATP.

This sequence belongs to the class-I aminoacyl-tRNA synthetase family. As to quaternary structure, monomer. It depends on Zn(2+) as a cofactor.

It is found in the cytoplasm. It carries out the reaction tRNA(Cys) + L-cysteine + ATP = L-cysteinyl-tRNA(Cys) + AMP + diphosphate. This chain is Cysteine--tRNA ligase (cysS), found in Helicobacter pylori (strain ATCC 700392 / 26695) (Campylobacter pylori).